The primary structure comprises 126 residues: Profilin (126 aa).

Belongs to the profilin family. In terms of assembly, occurs in many kinds of cells as a complex with monomeric actin in a 1:1 ratio.

It localises to the cytoplasm. Its subcellular location is the cytoskeleton. Functionally, binds to actin and affects the structure of the cytoskeleton. At high concentrations, profilin prevents the polymerization of actin, whereas it enhances it at low concentrations. By binding to PIP2, it inhibits the formation of IP3 and DG. This Bombyx mori (Silk moth) protein is Profilin.